The following is a 129-amino-acid chain: Glycine cleavage system H protein (129 aa).

In terms of domain architecture, Lipoyl-binding spans 24-106; it reads SYTVGITEHA…YGEGWFFRVM (83 aa). Residue K65 is modified to N6-lipoyllysine.

The protein belongs to the GcvH family. As to quaternary structure, the glycine cleavage system is composed of four proteins: P, T, L and H. Requires (R)-lipoate as cofactor.

In terms of biological role, the glycine cleavage system catalyzes the degradation of glycine. The H protein shuttles the methylamine group of glycine from the P protein to the T protein. The chain is Glycine cleavage system H protein from Shewanella oneidensis (strain ATCC 700550 / JCM 31522 / CIP 106686 / LMG 19005 / NCIMB 14063 / MR-1).